A 123-amino-acid chain; its full sequence is WAP four-disulfide core domain protein 5 (123 aa).

The signal sequence occupies residues 1–24; it reads MRIQSLLLLGALLAVGSQPPAAFG. WAP domains lie at 27 to 73 and 74 to 121; these read KGEK…CVPR and VSVK…RDPA. 8 disulfide bridges follow: cysteine 34–cysteine 62, cysteine 41–cysteine 66, cysteine 49–cysteine 61, cysteine 55–cysteine 70, cysteine 81–cysteine 109, cysteine 88–cysteine 113, cysteine 96–cysteine 108, and cysteine 102–cysteine 117.

It is found in the secreted. In terms of biological role, putative acid-stable proteinase inhibitor. The protein is WAP four-disulfide core domain protein 5 (WFDC5) of Saimiri boliviensis boliviensis (Bolivian squirrel monkey).